We begin with the raw amino-acid sequence, 427 residues long: Serine--tRNA ligase (427 aa).

230-232 (TSE) provides a ligand contact to L-serine. 261–263 (RSE) lines the ATP pocket. Glu-284 contacts L-serine. An ATP-binding site is contributed by 348-351 (EISS). L-serine is bound at residue Ser-384.

This sequence belongs to the class-II aminoacyl-tRNA synthetase family. Type-1 seryl-tRNA synthetase subfamily. In terms of assembly, homodimer. The tRNA molecule binds across the dimer.

The protein resides in the cytoplasm. It catalyses the reaction tRNA(Ser) + L-serine + ATP = L-seryl-tRNA(Ser) + AMP + diphosphate + H(+). The enzyme catalyses tRNA(Sec) + L-serine + ATP = L-seryl-tRNA(Sec) + AMP + diphosphate + H(+). The protein operates within aminoacyl-tRNA biosynthesis; selenocysteinyl-tRNA(Sec) biosynthesis; L-seryl-tRNA(Sec) from L-serine and tRNA(Sec): step 1/1. In terms of biological role, catalyzes the attachment of serine to tRNA(Ser). Is also able to aminoacylate tRNA(Sec) with serine, to form the misacylated tRNA L-seryl-tRNA(Sec), which will be further converted into selenocysteinyl-tRNA(Sec). This is Serine--tRNA ligase from Desulforapulum autotrophicum (strain ATCC 43914 / DSM 3382 / VKM B-1955 / HRM2) (Desulfobacterium autotrophicum).